We begin with the raw amino-acid sequence, 170 residues long: Putative 5'(3')-deoxyribonucleotidase (170 aa).

Asp-28 functions as the Nucleophile in the catalytic mechanism. Positions 28, 30, and 134 each coordinate Mg(2+). Catalysis depends on Asp-30, which acts as the Proton donor.

Belongs to the 5'(3')-deoxyribonucleotidase family. Mg(2+) serves as cofactor.

In terms of biological role, dephosphorylates the 5' and 2'(3')-phosphates of deoxyribonucleotides. The protein is Putative 5'(3')-deoxyribonucleotidase of Vibrio parahaemolyticus (KVP40).